We begin with the raw amino-acid sequence, 155 residues long: Ribosome maturation factor RimP (155 aa).

Belongs to the RimP family.

It is found in the cytoplasm. Its function is as follows. Required for maturation of 30S ribosomal subunits. This Lachnoclostridium phytofermentans (strain ATCC 700394 / DSM 18823 / ISDg) (Clostridium phytofermentans) protein is Ribosome maturation factor RimP.